The primary structure comprises 153 residues: Large ribosomal subunit protein uL15 (153 aa).

The disordered stretch occupies residues 1-42; sequence MKLNTIKPGIGSAKPKRRVGRGIGSGLGKTCGRGHKGQKSRA. Residues 21–31 show a composition bias toward gly residues; the sequence is RGIGSGLGKTC.

This sequence belongs to the universal ribosomal protein uL15 family. In terms of assembly, part of the 50S ribosomal subunit.

Its function is as follows. Binds to the 23S rRNA. The sequence is that of Large ribosomal subunit protein uL15 from Nitrosomonas europaea (strain ATCC 19718 / CIP 103999 / KCTC 2705 / NBRC 14298).